The following is a 267-amino-acid chain: Fibroin light chain (267 aa).

The first 16 residues, methionine 1–alanine 16, serve as a signal peptide directing secretion. An N-acetylserine; in short form modification is found at serine 19. A disulfide bridge connects residues cysteine 103 and cysteine 162.

In terms of assembly, silk fibroin elementary unit consists in a disulfide-linked heavy and light chain and a p25 glycoprotein in molar ratios of 6:6:1. This results in a complex of approximately 2.3 MDa. In terms of processing, partially N-terminally processed to yield a short form which lacks the first two residues of the long form. The interchain disulfide bridge is essential for the intracellular transport and secretion of fibroin. Produced exclusively in the posterior (PSG) section of silk glands, which are essentially modified salivary glands.

The protein resides in the secreted. Functionally, it is likely that the major role of L-chain is to prevent the retention of H-chain in ER by forming the disulfide linkage. This Galleria mellonella (Greater wax moth) protein is Fibroin light chain (FIBL).